The following is a 207-amino-acid chain: Tetrathionate reductase subunit B (207 aa).

Positions Met1–Met28 are cleaved as a signal peptide. 4Fe-4S ferredoxin-type domains follow at residues Tyr34–Tyr63, Gly75–Glu106, and Gly107–Val136. Cys43, Cys46, Cys49, Cys53, Cys84, Cys87, Cys92, Cys96, Cys116, Cys119, Cys122, Cys126, Cys143, Cys146, Cys157, and Cys161 together coordinate [4Fe-4S] cluster.

As to quaternary structure, probably composed of three subunits: TtrA, TtrB and TtrC.

It is found in the cell membrane. Functionally, part of a membrane-bound tetrathionate reductase that catalyzes the reduction of tetrathionate to thiosulfate. TtrB is probably involved in transfer of electrons from TtrC to TtrA. This is Tetrathionate reductase subunit B (ttrB) from Archaeoglobus fulgidus (strain ATCC 49558 / DSM 4304 / JCM 9628 / NBRC 100126 / VC-16).